A 418-amino-acid polypeptide reads, in one-letter code: Glutamyl-tRNA reductase (418 aa).

Residues 49-52, S109, 114-116, and Q120 contribute to the substrate site; these read TCNR and EPQ. C50 serves as the catalytic Nucleophile. Position 189–194 (189–194) interacts with NADP(+); sequence GAGETI.

The protein belongs to the glutamyl-tRNA reductase family. Homodimer.

It carries out the reaction (S)-4-amino-5-oxopentanoate + tRNA(Glu) + NADP(+) = L-glutamyl-tRNA(Glu) + NADPH + H(+). It participates in porphyrin-containing compound metabolism; protoporphyrin-IX biosynthesis; 5-aminolevulinate from L-glutamyl-tRNA(Glu): step 1/2. Its function is as follows. Catalyzes the NADPH-dependent reduction of glutamyl-tRNA(Glu) to glutamate 1-semialdehyde (GSA). The polypeptide is Glutamyl-tRNA reductase (Enterobacter sp. (strain 638)).